A 212-amino-acid polypeptide reads, in one-letter code: Large ribosomal subunit protein uL3 (212 aa).

Position 153 is an N5-methylglutamine (Gln-153).

The protein belongs to the universal ribosomal protein uL3 family. As to quaternary structure, part of the 50S ribosomal subunit. Forms a cluster with proteins L14 and L19. In terms of processing, methylated by PrmB.

In terms of biological role, one of the primary rRNA binding proteins, it binds directly near the 3'-end of the 23S rRNA, where it nucleates assembly of the 50S subunit. The protein is Large ribosomal subunit protein uL3 of Shewanella denitrificans (strain OS217 / ATCC BAA-1090 / DSM 15013).